A 964-amino-acid chain; its full sequence is Translation initiation factor IF-2 (964 aa).

Low complexity predominate over residues 105 to 119 (AALAESEASEAAPVV). Disordered regions lie at residues 105-133 (AALA…EHRR) and 146-378 (KARQ…PTEP). Composition is skewed to basic and acidic residues over residues 123–133 (EVARREEEHRR), 146–183 (KARQ…KAEE), 197–253 (EAPR…RAIR), and 266–278 (PAER…KKAE). Over residues 288–302 (KPAGEARPAAAKKPA) the composition is skewed to low complexity. Residues 303–313 (APAPAAAPAPG) show a composition bias toward pro residues. Positions 464-633 (TRPPVVTVMG…LLQAEVLELK (170 aa)) constitute a tr-type G domain. The interval 473 to 480 (GHVDHGKT) is G1. 473-480 (GHVDHGKT) serves as a coordination point for GTP. A G2 region spans residues 498–502 (GITQH). Positions 519–522 (DTPG) are G3. Residues 519-523 (DTPGH) and 573-576 (TKVD) contribute to the GTP site. The interval 573 to 576 (TKVD) is G4. A G5 region spans residues 609–611 (SAK).

It belongs to the TRAFAC class translation factor GTPase superfamily. Classic translation factor GTPase family. IF-2 subfamily.

It is found in the cytoplasm. One of the essential components for the initiation of protein synthesis. Protects formylmethionyl-tRNA from spontaneous hydrolysis and promotes its binding to the 30S ribosomal subunits. Also involved in the hydrolysis of GTP during the formation of the 70S ribosomal complex. This is Translation initiation factor IF-2 from Ralstonia pickettii (strain 12J).